A 684-amino-acid chain; its full sequence is MENGCTSHWLLSRIAGSESRLANNRAFRCGSIEKAASYLIGELLIINQAEAKSNKRLPKFVHKADTYHKACARCKARGKTCAYGQGAVEKQTVHKPRGQASSVHMPVPMLVPPISSAPSLETPPESVAASPPTVDSIPVSHHVNEDPEAEPDLEKNRAYYTAHGRFAGQVAAAINERAGLIPATCNQVPLVDAPLFGDLNLPSQSCALSSSTELPPRAYADQLIDIYWQHVDPMEPVLDRQRFLENYEKAYSTPITPLCADYDLWLGILNVVFALAVQRQELNPLHQRNEEANRFFQRAWVLLPAESMLWKPGSLELVQCLMLMNRYLHCTNNQQKTWTTAGLAMRIAQSMCCHLTETPLLKGSSDDKALKQKVWASCVALDRCISWSLGKTSALVLIPSPPPSSPQQLGENAMHDTLGLRLHEIGNQIQLAQIQNRTSLAARFRPPLLSQQDEYHNAALQLDACLQDWENSIPSDWQPRNLRMVTDRSSRAERYLLHLRYLHHRIFLYRPMLARFYAMKPDTQPLHKSPSLSHRLLRESASMCIEAAQQVASLVNETLEPDEPIGLLPWWYRIYYLHIAGANFLAAMFRSELFTDSVSQSWESVMLALRAHEHLSPYVQQCLWTFETLAARITGKPYPSMDGGGCGLMVDGSSGVSFDDIFKDINFDFDNFIFGPEDFGEGLV.

The disordered stretch occupies residues 114-151 (ISSAPSLETPPESVAASPPTVDSIPVSHHVNEDPEAEP).

The protein localises to the nucleus. In terms of biological role, transcription factor that acts in concert with sorR1 which is a transcriptional activator of the gene cluster that mediates the biosynthesis of sorbicillinoids, a diverse group of yellow secondary metabolites that restrict growth of competing pathogenic fungi but not of bacteria. In Penicillium rubens (strain ATCC 28089 / DSM 1075 / NRRL 1951 / Wisconsin 54-1255) (Penicillium chrysogenum), this protein is Sorbicillinoid biosynthetic cluster transcription factor 2.